The primary structure comprises 188 residues: ATP synthase subunit b 2 (188 aa).

Residues 41–61 (FFWLVISFGFFYFFIARVIVP) traverse the membrane as a helical segment.

The protein belongs to the ATPase B chain family. As to quaternary structure, F-type ATPases have 2 components, F(1) - the catalytic core - and F(0) - the membrane proton channel. F(1) has five subunits: alpha(3), beta(3), gamma(1), delta(1), epsilon(1). F(0) has three main subunits: a(1), b(2) and c(10-14). The alpha and beta chains form an alternating ring which encloses part of the gamma chain. F(1) is attached to F(0) by a central stalk formed by the gamma and epsilon chains, while a peripheral stalk is formed by the delta and b chains.

The protein localises to the cell inner membrane. In terms of biological role, f(1)F(0) ATP synthase produces ATP from ADP in the presence of a proton or sodium gradient. F-type ATPases consist of two structural domains, F(1) containing the extramembraneous catalytic core and F(0) containing the membrane proton channel, linked together by a central stalk and a peripheral stalk. During catalysis, ATP synthesis in the catalytic domain of F(1) is coupled via a rotary mechanism of the central stalk subunits to proton translocation. Its function is as follows. Component of the F(0) channel, it forms part of the peripheral stalk, linking F(1) to F(0). The b'-subunit is a diverged and duplicated form of b found in plants and photosynthetic bacteria. This is ATP synthase subunit b 2 (atpF2) from Bartonella bacilliformis (strain ATCC 35685 / KC583 / Herrer 020/F12,63).